A 628-amino-acid chain; its full sequence is Nucleoside-triphosphatase 1 (628 aa).

Positions 1 to 25 (MWLPVYVPLLLVFGVSLSLPQGSLG) are cleaved as a signal peptide. Glutamate 236 (proton acceptor) is an active-site residue. N-linked (GlcNAc...) asparagine glycosylation is present at asparagine 432.

The protein belongs to the GDA1/CD39 NTPase family. In terms of assembly, homotetramer.

Its subcellular location is the secreted. It localises to the parasitophorous vacuole. The enzyme catalyses a ribonucleoside 5'-triphosphate + H2O = a ribonucleoside 5'-diphosphate + phosphate + H(+). Its function is as follows. May perform an important processing step in the conversion of high energy nucleotides prior to uptake by the parasite and may contribute to intracellular survival and virulence. NTPAse-I has a specific activity 4.5-fold higher than NTPAse-II in hydrolysis of ATP. The primary difference between these isozymes lies in their ability to hydrolyze nucleoside triphosphate versus diphosphate substrates. While NTPAse-II hydrolyzes ATP to ADP and ADP to AMP at almost the same rate, NTPAse-I hydrolyzes ADP to AMP at a much slower rate (0.7% of the rate for ATP). The chain is Nucleoside-triphosphatase 1 (NTP3) from Toxoplasma gondii.